The following is a 325-amino-acid chain: Endo-1,4-beta-xylanase 2 (325 aa).

An N-terminal signal peptide occupies residues 1–18 (MLYTSIFAAAMAASGAMA). Residues 26 to 325 (ASNCTTLDSF…KAAVKAIMAI (300 aa)) enclose the GH10 domain. An N-linked (GlcNAc...) asparagine glycan is attached at Asn28. Catalysis depends on Glu157, which acts as the Proton donor. Glu262 acts as the Nucleophile in catalysis. The cysteines at positions 280 and 286 are disulfide-linked.

The protein belongs to the glycosyl hydrolase 10 (cellulase F) family.

The protein localises to the secreted. It carries out the reaction Endohydrolysis of (1-&gt;4)-beta-D-xylosidic linkages in xylans.. It participates in glycan degradation; xylan degradation. Its function is as follows. Endo-1,4-beta-xylanase involved in the hydrolysis of xylan, a major structural heterogeneous polysaccharide found in plant biomass representing the second most abundant polysaccharide in the biosphere, after cellulose. The polypeptide is Endo-1,4-beta-xylanase 2 (xyl2) (Claviceps purpurea (Ergot fungus)).